A 745-amino-acid chain; its full sequence is MGPFGALCLAWALLGVVRACPEPCACVDKYAHQFADCAYKELREVPEGLPANVTTLSLSANKITVLRRGAFVNVTQVTSLWLAHSEVRTVESGALAVLSQLKNLDLSHNLISNFPWSDLRNLSALQLLKMNHNRLGSLPRDALGALPDLRSLRINNNRLRTLEPGTFDALSALSHLQLYHNPFHCSCGLVWLQAWAASTRVSLPEPDSIACASPPELQGVPVHRLPALPCAPPSVRLSAEPPPEAPGTPLRAGLAFMLHCVAEGHPTPRLQWQLQIPGGTVVLVPPVLSKEEDGGDKVEDGEGDGDEDLPTQTEAPTPTPAPAWPAPPATPRFLALANGSLLVPLLSAKEAGIYTCRAHNELGTNSTSLRVTVAAAGPPKHAPGTGEEPDAQVPTSERKATTKGRSNSVLPFKPEGKTKGQGLARVSVLGEIEAELEETDEGEQMEGQIPADPMGEKHCGHGDPSRYVSNHAFNQSSDLKPHVFELGVIALDVAEREARVQLTPLAARWGPGPDGASGARRPGRRPLRLLYLCPAGGGTAVQWSRVEEGVNAYWFRGLRPGTNYSVCLALAGEACHVQVVFSTKKELPSLLVIVTVSVFLLVLATVPLLGAACCHLLAKHPGKPYRLILRPQAPDPMEKRIAADFDPRASYLESEKSYPARGEAGGEEPEEVPEEGLDEDVEQGDPSGDLQREESLAGCSLVESQSKANQEEFEAGSEYSDRLPLGAEAVNIAQEINGNYRQTAG.

An N-terminal signal peptide occupies residues 1–19 (MGPFGALCLAWALLGVVRA). The region spanning 20-51 (CPEPCACVDKYAHQFADCAYKELREVPEGLPA) is the LRRNT domain. Residues 20 to 589 (CPEPCACVDK…VFSTKKELPS (570 aa)) lie on the Extracellular side of the membrane. N-linked (GlcNAc...) asparagine glycosylation is found at N52 and N73. LRR repeat units follow at residues 52–73 (NVTT…AFVN), 76–97 (QVTS…ALAV), 100–123 (QLKN…RNLS), 124–145 (ALQL…ALGA), and 148–169 (DLRS…TFDA). N121 carries N-linked (GlcNAc...) asparagine glycosylation. The region spanning 181–232 (NPFHCSCGLVWLQAWAASTRVSLPEPDSIACASPPELQGVPVHRLPALPCAP) is the LRRCT domain. Positions 233–372 (PSVRLSAEPP…GTNSTSLRVT (140 aa)) constitute an Ig-like domain. Residues C260 and C356 are joined by a disulfide bond. The span at 290-300 (KEEDGGDKVED) shows a compositional bias: basic and acidic residues. A disordered region spans residues 290–328 (KEEDGGDKVEDGEGDGDEDLPTQTEAPTPTPAPAWPAPP). The span at 317–328 (TPTPAPAWPAPP) shows a compositional bias: pro residues. N-linked (GlcNAc...) asparagine glycosylation is found at N338 and N365. The disordered stretch occupies residues 376–423 (AGPPKHAPGTGEEPDAQVPTSERKATTKGRSNSVLPFKPEGKTKGQGL). N-linked (GlcNAc...) asparagine glycosylation is found at N474 and N563. The chain crosses the membrane as a helical span at residues 590–610 (LLVIVTVSVFLLVLATVPLLG). Residues 611-745 (AACCHLLAKH…INGNYRQTAG (135 aa)) lie on the Cytoplasmic side of the membrane. Residues 654 to 697 (SEKSYPARGEAGGEEPEEVPEEGLDEDVEQGDPSGDLQREESLA) form a disordered region. Positions 665 to 683 (GGEEPEEVPEEGLDEDVEQ) are enriched in acidic residues. Phosphotyrosine is present on Y719. S720 is modified (phosphoserine).

As to quaternary structure, homomultimer. Interacts with NTRK1/TrkA. As to expression, at 11.5 dpc, expressed in spinal nerves, their roots and the ventral spinal cord. At 12.5 dpc, detected in the ventral spinal cord, dorsal root ganglia (DRG), dorsal and ventral roots and sympathetic chain ganglia. At 12.5 dpc, expressed in almost all motor neurons which also express RET and in almost all DRG sensory neurons which also express NTRK1. At 18.5 dpc, expressed only in a subset of NTRK1-expressing neurons but still expressed in nearly all RET-expressing neurons.

It is found in the cell membrane. In terms of biological role, required for axon extension during neural development. This is Immunoglobulin superfamily containing leucine-rich repeat protein 2 (Islr2) from Mus musculus (Mouse).